The sequence spans 637 residues: Phosphomethylpyrimidine synthase (637 aa).

Residues Asn242, Met271, Tyr300, His336, 356 to 358, 397 to 400, and Glu436 each bind substrate; these read SRG and DGLR. His440 contributes to the Zn(2+) binding site. Tyr463 provides a ligand contact to substrate. His504 contacts Zn(2+). [4Fe-4S] cluster-binding residues include Cys584, Cys587, and Cys592.

This sequence belongs to the ThiC family. As to quaternary structure, homodimer. [4Fe-4S] cluster is required as a cofactor.

The catalysed reaction is 5-amino-1-(5-phospho-beta-D-ribosyl)imidazole + S-adenosyl-L-methionine = 4-amino-2-methyl-5-(phosphooxymethyl)pyrimidine + CO + 5'-deoxyadenosine + formate + L-methionine + 3 H(+). Its pathway is cofactor biosynthesis; thiamine diphosphate biosynthesis. Its function is as follows. Catalyzes the synthesis of the hydroxymethylpyrimidine phosphate (HMP-P) moiety of thiamine from aminoimidazole ribotide (AIR) in a radical S-adenosyl-L-methionine (SAM)-dependent reaction. In Bordetella pertussis (strain Tohama I / ATCC BAA-589 / NCTC 13251), this protein is Phosphomethylpyrimidine synthase.